A 320-amino-acid chain; its full sequence is Putative polysaccharide deacetylase (320 aa).

The NodB homology domain maps to 69–303 (RSIESCFEYG…ITSKEGVWVA (235 aa)).

The protein belongs to the polysaccharide deacetylase family. Homodimer.

It is found in the prospore. Its function is as follows. May deacetylate chitin. Required for spore formation. This chain is Putative polysaccharide deacetylase, found in Schizosaccharomyces pombe (strain 972 / ATCC 24843) (Fission yeast).